Reading from the N-terminus, the 311-residue chain is tRNA-cytidine(32) 2-sulfurtransferase (311 aa).

The short motif at 45 to 50 (SGGKDS) is the PP-loop motif element. [4Fe-4S] cluster is bound by residues C120, C123, and C211.

This sequence belongs to the TtcA family. In terms of assembly, homodimer. Mg(2+) serves as cofactor. Requires [4Fe-4S] cluster as cofactor.

It localises to the cytoplasm. It carries out the reaction cytidine(32) in tRNA + S-sulfanyl-L-cysteinyl-[cysteine desulfurase] + AH2 + ATP = 2-thiocytidine(32) in tRNA + L-cysteinyl-[cysteine desulfurase] + A + AMP + diphosphate + H(+). It functions in the pathway tRNA modification. Its function is as follows. Catalyzes the ATP-dependent 2-thiolation of cytidine in position 32 of tRNA, to form 2-thiocytidine (s(2)C32). The sulfur atoms are provided by the cysteine/cysteine desulfurase (IscS) system. The sequence is that of tRNA-cytidine(32) 2-sulfurtransferase from Shewanella pealeana (strain ATCC 700345 / ANG-SQ1).